The following is a 132-amino-acid chain: Transcription antitermination protein NusB (132 aa).

It belongs to the NusB family.

Functionally, involved in transcription antitermination. Required for transcription of ribosomal RNA (rRNA) genes. Binds specifically to the boxA antiterminator sequence of the ribosomal RNA (rrn) operons. This is Transcription antitermination protein NusB from Campylobacter jejuni subsp. jejuni serotype O:6 (strain 81116 / NCTC 11828).